Consider the following 97-residue polypeptide: Co-chaperonin GroES (97 aa).

It belongs to the GroES chaperonin family. Heptamer of 7 subunits arranged in a ring. Interacts with the chaperonin GroEL.

It is found in the cytoplasm. Functionally, together with the chaperonin GroEL, plays an essential role in assisting protein folding. The GroEL-GroES system forms a nano-cage that allows encapsulation of the non-native substrate proteins and provides a physical environment optimized to promote and accelerate protein folding. GroES binds to the apical surface of the GroEL ring, thereby capping the opening of the GroEL channel. The chain is Co-chaperonin GroES from Klebsiella pneumoniae (strain 342).